Here is a 537-residue protein sequence, read N- to C-terminus: Tripeptidyl aminopeptidase (537 aa).

Positions 1–36 (MRKSSIRRRATAFGTAGALVTATLIAGAVSAPAASA) are cleaved as a signal peptide. Positions 37–39 (APA) are excised as a propeptide. Positions 119-497 (GALIYNPGGP…SRLITERDAG (379 aa)) constitute an AB hydrolase-1 domain. The active-site Nucleophile is Ser245. The active site involves Asp470. The active-site Proton donor is His499.

The protein belongs to the peptidase S33 family.

It is found in the secreted. Functionally, cleaves tripeptides from the N-termini of proteins. Does not cleave mono- or dipeptides, or N-terminally blocked peptides. This chain is Tripeptidyl aminopeptidase, found in Streptomyces lividans.